Reading from the N-terminus, the 355-residue chain is MASNPEERNSDKQKALDNAISQIEKAFGKGAIMKLKQNPVEKIDTISTGSIALDSALGVGGLPKGRIIEIFGPESSGKTTLALHVIAEAQKKGGSCAFIDAEHALDVLYARKLGVSTDDLVISQPDTGEQALHIVEYLVCSGAVDVIVIDSVAALTPRAEIEGDMGDQHMGLQARLLSHGLRKLTSAVSKANCILIFINQIRMKIGVVYGNPETTTGGNALKFYTSVRLDIRKIGVIKDKENITGNETRVKVVKNKVAPPFREAKFDIMYNEGISKLGEIIDMGAKLGVLEKAGAYYSYNNTRLGQGRENVKTYLKTNKEVANEIETKIRDLLRNHDNSIIIDEDSEQLLEESVF.

Residue 72-79 (GPESSGKT) coordinates ATP.

It belongs to the RecA family.

The protein resides in the cytoplasm. Its function is as follows. Can catalyze the hydrolysis of ATP in the presence of single-stranded DNA, the ATP-dependent uptake of single-stranded DNA by duplex DNA, and the ATP-dependent hybridization of homologous single-stranded DNAs. It interacts with LexA causing its activation and leading to its autocatalytic cleavage. The sequence is that of Protein RecA from Wolbachia sp. subsp. Drosophila simulans (strain wRi).